A 234-amino-acid chain; its full sequence is Probable glycerol uptake facilitator protein (234 aa).

A run of 2 helical transmembrane segments spans residues Val-3–Ala-23 and Gly-36–Gly-56. The NPA 1 signature appears at Asn-64–Ala-66. Helical transmembrane passes span Val-82–Leu-102, Leu-134–Asn-154, and Leu-164–Ile-184. Residues Asn-185–Ala-187 carry the NPA 2 motif. The helical transmembrane segment at Val-214–Phe-234 threads the bilayer.

The protein belongs to the MIP/aquaporin (TC 1.A.8) family.

The protein localises to the cell membrane. It catalyses the reaction glycerol(in) = glycerol(out). Its function is as follows. Mediates glycerol diffusion across the cytoplasmic membrane via a pore-type mechanism. This Thermotoga maritima (strain ATCC 43589 / DSM 3109 / JCM 10099 / NBRC 100826 / MSB8) protein is Probable glycerol uptake facilitator protein (glpF).